Reading from the N-terminus, the 974-residue chain is Membrane-associated phosphatidylinositol transfer protein 3 (974 aa).

Phosphoserine occurs at positions 30, 31, 109, 295, 298, 321, 343, and 495. Residues 310-347 (CSLASSKRLSKSNVDVSSGVEDEDPKRPLPRKQSDSST) form a disordered region. Residues 312–325 (LASSKRLSKSNVDV) show a composition bias toward polar residues. Positions 390-594 (FDFDVSDFFL…VAFILRQVMR (205 aa)) constitute a DDHD domain. A disordered region spans residues 497–535 (PLLDAPASPPQAPRFQRTERRLSKGSSHSDSSESSDSLA). The segment covering 520-533 (KGSSHSDSSESSDS) has biased composition (low complexity). S612, S907, S928, and S946 each carry phosphoserine. Positions 927–974 (MSVQQPDPPAANPKPERAQSQPESDKDHERPLPALSWARGPPKFESVP) are disordered.

This sequence belongs to the PtdIns transfer protein family. PI transfer class IIA subfamily. As to quaternary structure, interacts with PTK2B via its C-terminus.

It is found in the endomembrane system. Functionally, catalyzes the transfer of phosphatidylinositol and phosphatidylcholine between membranes (in vitro). Binds calcium ions. In Mus musculus (Mouse), this protein is Membrane-associated phosphatidylinositol transfer protein 3 (Pitpnm3).